The chain runs to 559 residues: Sesquiterpene synthase (559 aa).

The Mg(2+) site is built by aspartate 312, aspartate 316, and glutamate 464. Positions 312-316 (DDIYD) match the DDXXD motif motif.

The protein belongs to the terpene synthase family. Tpsa subfamily. It depends on Mg(2+) as a cofactor. Mn(2+) serves as cofactor.

Its function is as follows. Catalyzes alpha-humulene and delta-cadinene, as well as beta-elemene, the thermal rearrangement product of germacrene A and several other bicyclic sesquiterpenes when incubated with (2E,6E)-farnesyl diphosphate. The chain is Sesquiterpene synthase from Santalum austrocaledonicum (Sandalwood).